Consider the following 350-residue polypeptide: Putative ankyrin repeat protein RBE_0589 (350 aa).

ANK repeat units lie at residues 81-110 (DGFT…NPNI), 114-151 (DIVT…EPTD), and 153-182 (SGWT…NLDI).

The protein is Putative ankyrin repeat protein RBE_0589 of Rickettsia bellii (strain RML369-C).